A 310-amino-acid chain; its full sequence is MPVPTTLLQSDLPGLPLRHRGKVRDVFDIPRERLPAGTPPGEYLLMVATDRLSAFDVVLPDPIPGKGEMLCQVSNFWFAKTAHLMPNHLTGIDVASVLPEGVDPALYARRAVVTRKLKPVPVEAIARGYLIGSGWKDYQRTGKVSGIDLPDGLRQAEQLPEPIFTPSTKAAVGDHDENIDFDAMVKQVGAELAERVRDATLRIYKFAADYARERGIILADTKFEFGTDADGRLYIMDEMLTPDSSRYWPADEYEVGTSPPSYDKQFVRDYLETLDWGKTAPGPTIPAEIIERTRAKYAEALQRLAGISVD.

This sequence belongs to the SAICAR synthetase family.

The enzyme catalyses 5-amino-1-(5-phospho-D-ribosyl)imidazole-4-carboxylate + L-aspartate + ATP = (2S)-2-[5-amino-1-(5-phospho-beta-D-ribosyl)imidazole-4-carboxamido]succinate + ADP + phosphate + 2 H(+). Its pathway is purine metabolism; IMP biosynthesis via de novo pathway; 5-amino-1-(5-phospho-D-ribosyl)imidazole-4-carboxamide from 5-amino-1-(5-phospho-D-ribosyl)imidazole-4-carboxylate: step 1/2. The chain is Phosphoribosylaminoimidazole-succinocarboxamide synthase from Stenotrophomonas maltophilia (strain K279a).